Here is a 279-residue protein sequence, read N- to C-terminus: MAMNHPLFSQEQPQSWPWGVAMYANFHYHHHYEKEHMFEKPLTPSDVGKLNRLVIPKQHAERYFPLGAGDAADKGLILSFEDEAGAPWRFRYSYWTSSQSYVLTKGWSRYVKEKRLDAGDVVHFERVRGSFGVGDRLFIGCRRRGDAAAAQTPAPPPAVRVAPAAQNAGEQQPWSPMCYSTSGGGSYPTSPANSYAYRRAADHDHGDMHHADESPRDTDSPSFSAGSAPSRRLRLFGVNLDCGPEPEADTTAAATMYGYMHQQSSYAAMSAVPSYWGNS.

The segment at residues 38–144 (FEKPLTPSDV…DRLFIGCRRR (107 aa)) is a DNA-binding region (TF-B3). Disordered regions lie at residues 148 to 182 (AAAQ…YSTS) and 203 to 228 (HDHG…AGSA). The span at 159 to 168 (VRVAPAAQNA) shows a compositional bias: low complexity. Positions 203–219 (HDHGDMHHADESPRDTD) are enriched in basic and acidic residues.

It localises to the nucleus. The sequence is that of B3 domain-containing protein Os11g0156000 from Oryza sativa subsp. japonica (Rice).